The chain runs to 196 residues: Chromophore lyase CpcT/CpeT (196 aa).

The protein belongs to the CpcT/CpeT biliprotein lyase family.

Covalently attaches a chromophore to Cys residue(s) of phycobiliproteins. The chain is Chromophore lyase CpcT/CpeT from Synechocystis sp. (strain ATCC 27184 / PCC 6803 / Kazusa).